We begin with the raw amino-acid sequence, 167 residues long: Ribosome maturation factor RimM (167 aa).

The PRC barrel domain occupies 94–165; sequence ENEYYYSDII…KIIITPMEGL (72 aa).

This sequence belongs to the RimM family. As to quaternary structure, binds ribosomal protein uS19.

It is found in the cytoplasm. Functionally, an accessory protein needed during the final step in the assembly of 30S ribosomal subunit, possibly for assembly of the head region. Essential for efficient processing of 16S rRNA. May be needed both before and after RbfA during the maturation of 16S rRNA. It has affinity for free ribosomal 30S subunits but not for 70S ribosomes. The polypeptide is Ribosome maturation factor RimM (Staphylococcus aureus (strain bovine RF122 / ET3-1)).